Here is a 361-residue protein sequence, read N- to C-terminus: 5-formaminoimidazole-4-carboxamide-1-(beta)-D-ribofuranosyl 5'-monophosphate synthetase (361 aa).

H27 and S94 together coordinate 5-amino-1-(5-phospho-beta-D-ribosyl)imidazole-4-carboxamide. Residues 116-348 (RAILRWEAER…MGQRIAKEIK (233 aa)) enclose the ATP-grasp domain. ATP contacts are provided by residues 146 to 208 (PDEI…ANYC) and E230. N258 is a binding site for 5-amino-1-(5-phospho-beta-D-ribosyl)imidazole-4-carboxamide. 2 residues coordinate Mg(2+): Q297 and E310.

The protein belongs to the phosphohexose mutase family. Requires Mg(2+) as cofactor. Mn(2+) serves as cofactor.

The enzyme catalyses 5-amino-1-(5-phospho-beta-D-ribosyl)imidazole-4-carboxamide + formate + ATP = 5-formamido-1-(5-phospho-D-ribosyl)imidazole-4-carboxamide + ADP + phosphate. It functions in the pathway purine metabolism; IMP biosynthesis via de novo pathway; 5-formamido-1-(5-phospho-D-ribosyl)imidazole-4-carboxamide from 5-amino-1-(5-phospho-D-ribosyl)imidazole-4-carboxamide (formate route): step 1/1. In terms of biological role, catalyzes the ATP- and formate-dependent formylation of 5-aminoimidazole-4-carboxamide-1-beta-d-ribofuranosyl 5'-monophosphate (AICAR) to 5-formaminoimidazole-4-carboxamide-1-beta-d-ribofuranosyl 5'-monophosphate (FAICAR) in the absence of folates. This Methanococcus maripaludis (strain DSM 14266 / JCM 13030 / NBRC 101832 / S2 / LL) protein is 5-formaminoimidazole-4-carboxamide-1-(beta)-D-ribofuranosyl 5'-monophosphate synthetase.